A 43-amino-acid polypeptide reads, in one-letter code: Protein PsbN (43 aa).

Residues 7–27 form a helical membrane-spanning segment; that stretch reads LSIGIAVVVIAVTGFSIYTAF.

This sequence belongs to the PsbN family.

Its subcellular location is the cellular thylakoid membrane. In terms of biological role, may play a role in photosystem I and II biogenesis. The polypeptide is Protein PsbN (Picosynechococcus sp. (strain ATCC 27264 / PCC 7002 / PR-6) (Agmenellum quadruplicatum)).